A 321-amino-acid polypeptide reads, in one-letter code: XylDLEGF operon transcriptional activator 1 (321 aa).

In terms of domain architecture, HTH araC/xylS-type spans 214 to 315; the sequence is ERVVQFIEEN…GELPSDTLRQ (102 aa). 2 consecutive DNA-binding regions (H-T-H motif) follow at residues 231–252 and 282–305; these read ERLA…EKHA and ITEI…RSAF.

The protein localises to the cytoplasm. Its function is as follows. Regulatory protein of the TOL plasmid xyl operons. XylS activates the xylXYZLTEGFJQKIH operon required for the degradation of toluene, m-xylene and p-xylene. The polypeptide is XylDLEGF operon transcriptional activator 1 (xylS1) (Pseudomonas putida (Arthrobacter siderocapsulatus)).